We begin with the raw amino-acid sequence, 149 residues long: Protegrin-4 (149 aa).

Residues 1–29 (METQRASLCLGRWSLWLLLLALVVPSASA) form the signal peptide. A propeptide spanning residues 30–130 (QALSYREAVL…DITCNEVQGV (101 aa)) is cleaved from the precursor. Positions 61–80 (DQPPKADEDPGTPKPVSFTV) are disordered. 4 disulfides stabilise this stretch: cysteine 85–cysteine 96, cysteine 107–cysteine 124, cysteine 136–cysteine 145, and cysteine 138–cysteine 143. Arginine 148 carries the post-translational modification Arginine amide.

This sequence belongs to the cathelicidin family.

The protein localises to the secreted. In terms of biological role, microbicidal activity. The sequence is that of Protegrin-4 (NPG4) from Sus scrofa (Pig).